A 610-amino-acid polypeptide reads, in one-letter code: Elongation factor 4 (610 aa).

One can recognise a tr-type G domain in the interval 11-193 (EKIRNFSIIA…QIVEKVPAPT (183 aa)). GTP-binding positions include 23–28 (DHGKST) and 140–143 (NKID).

It belongs to the TRAFAC class translation factor GTPase superfamily. Classic translation factor GTPase family. LepA subfamily.

It is found in the cell membrane. The enzyme catalyses GTP + H2O = GDP + phosphate + H(+). Its function is as follows. Required for accurate and efficient protein synthesis under certain stress conditions. May act as a fidelity factor of the translation reaction, by catalyzing a one-codon backward translocation of tRNAs on improperly translocated ribosomes. Back-translocation proceeds from a post-translocation (POST) complex to a pre-translocation (PRE) complex, thus giving elongation factor G a second chance to translocate the tRNAs correctly. Binds to ribosomes in a GTP-dependent manner. The polypeptide is Elongation factor 4 (Streptococcus pyogenes serotype M6 (strain ATCC BAA-946 / MGAS10394)).